The primary structure comprises 118 residues: Small ribosomal subunit protein uS13 (118 aa).

A disordered region spans residues 92–118 (RRGHPLRGQRTRTNARTRKGPRKAIRK).

It belongs to the universal ribosomal protein uS13 family. Part of the 30S ribosomal subunit. Forms a loose heterodimer with protein S19. Forms two bridges to the 50S subunit in the 70S ribosome.

Located at the top of the head of the 30S subunit, it contacts several helices of the 16S rRNA. In the 70S ribosome it contacts the 23S rRNA (bridge B1a) and protein L5 of the 50S subunit (bridge B1b), connecting the 2 subunits; these bridges are implicated in subunit movement. Contacts the tRNAs in the A and P-sites. The sequence is that of Small ribosomal subunit protein uS13 from Xanthomonas campestris pv. campestris (strain ATCC 33913 / DSM 3586 / NCPPB 528 / LMG 568 / P 25).